Reading from the N-terminus, the 670-residue chain is Solute carrier organic anion transporter family member 1A5 (670 aa).

Topologically, residues 1 to 20 (MGETEKRIATHGVRCFSKIK) are cytoplasmic. A helical transmembrane segment spans residues 21-40 (MFLLALTCAYVSKSLSGIYM). Topologically, residues 41 to 59 (NSMLTQIERQFDIPTSIVG) are extracellular. The chain crosses the membrane as a helical span at residues 60–80 (LINGSFEIGNLLLIILVSYFG). Over 81–86 (TKLHRP) the chain is Cytoplasmic. A helical transmembrane segment spans residues 87–111 (IMIGIGCVIMGLGCFLMSLPHFLMG). Residues 112-155 (RYEYETTISPTSNLSSNSFLCMENRTQTLKPTQDPAECVKEMKS) lie on the Extracellular side of the membrane. Asparagine 124 and asparagine 135 each carry an N-linked (GlcNAc...) asparagine glycan. A helical transmembrane segment spans residues 156-184 (LMWIYVLVGNIIRGIGETPIMPLGISYIE). Topologically, residues 185–203 (DFAKSENSPLYIGILESGK) are cytoplasmic. The helical transmembrane segment at 204 to 224 (MIGPIVGLLLGSFCARIYVDT) threads the bilayer. Over 225–242 (GSVNTDDLTITPTDTRWV) the chain is Extracellular. A helical transmembrane segment spans residues 243 to 267 (GAWWIGFLVCAGVNILTSIPFFFFP). Over 268–311 (KTLPKEGLQDNVARTENDKEEKHREKAKEENRGITKDFLPFMKS) the chain is Cytoplasmic. The helical transmembrane segment at 312 to 333 (LSCNPIYMLLILTSVLQINAFI) threads the bilayer. The Extracellular portion of the chain corresponds to 334-353 (NMFTFLPKYLEQQYGKSTSE). The chain crosses the membrane as a helical span at residues 354–377 (VVLLIGVCNLPPICIGYLLIGFIM). Topologically, residues 378 to 381 (KKFR) are cytoplasmic. Residues 382–405 (ITVKKAAYMAFCLSLFEYLLSYFH) form a helical membrane-spanning segment. Topologically, residues 406–513 (FMISCDNFQV…PECANKLQYF (108 aa)) are extracellular. A Kazal-like domain is found at 433-488 (NKVLADCNTRCSCLTNTWDPVCGDNGLSYMSACLAGCEKSVGMGTHMVFQNCSCIQ). Cystine bridges form between cysteine 439/cysteine 469, cysteine 445/cysteine 465, and cysteine 454/cysteine 486. N-linked (GlcNAc...) asparagine glycosylation is found at asparagine 483 and asparagine 492. A helical membrane pass occupies residues 514 to 536 (LIMSVIGSFIYSITAIPGYMVLL). The Cytoplasmic portion of the chain corresponds to 537-545 (RCIKSEEKS). Residues 546–571 (LGIGLHAFCTRIFAGIPAPIYFGALI) form a helical membrane-spanning segment. Over 572-605 (DRTCLHWGTLKCGEPGACRIYNINNFRRIYLVLP) the chain is Extracellular. A helical transmembrane segment spans residues 606–623 (AALRGSSYLPAFFILILM). Residues 624-670 (RKFQLPGEMYSSETELADMKQTVKKSECTDVHGIPKVENDGELKTKL) are Cytoplasmic-facing.

Belongs to the organo anion transporter (TC 2.A.60) family. In terms of tissue distribution, expressed in brain, choroid plexus and lung, but not in liver or kidney.

It is found in the cell membrane. Its subcellular location is the basal cell membrane. It catalyses the reaction taurocholate(out) = taurocholate(in). The enzyme catalyses glycocholate(out) = glycocholate(in). The catalysed reaction is taurochenodeoxycholate(out) = taurochenodeoxycholate(in). It carries out the reaction tauroursodeoxycholate(out) = tauroursodeoxycholate(in). It catalyses the reaction 3,3',5'-triiodo-L-thyronine(out) = 3,3',5'-triiodo-L-thyronine(in). The enzyme catalyses L-thyroxine(out) = L-thyroxine(in). The catalysed reaction is taurodeoxycholate(out) = taurodeoxycholate(in). It carries out the reaction glycodeoxycholate(out) = glycodeoxycholate(in). It catalyses the reaction glycochenodeoxycholate(out) = glycochenodeoxycholate(in). The enzyme catalyses glycoursodeoxycholate(out) = glycoursodeoxycholate(in). The catalysed reaction is estrone 3-sulfate(out) = estrone 3-sulfate(in). It carries out the reaction prostaglandin E2(out) = prostaglandin E2(in). It catalyses the reaction substance P(out) = substance P(in). Functionally, na(+)-independent transporter that mediates the cellular uptake of a broad range of organic anions such as the endogenous bile salts cholate and deoxycholate, either in their unconjugated or conjugated forms (taurocholate and glycocholate), estrone 3-sulfate and prostaglandin E2, at the plasma membrane. Responsible for intestinal absorption of bile acids. Capable of thyroid hormone transport (both T3 or 3,3',5'-triiodo-L-thyronine, and T4 or L-tyroxine). Plays roles in blood-brain and -cerebrospinal fluid barrier transport of organic anions and signal mediators, and in hormone uptake by neural cells. May also play a role in the reuptake of neuropeptides such as substance P/TAC1 and vasoactive intestinal peptide/VIP released from retinal neurons. Shows a pH-sensitive substrate specificity which may be ascribed to the protonation state of the binding site and leads to a stimulation of substrate transport in an acidic microenvironment. Hydrogencarbonate/HCO3(-) acts as the probable counteranion that exchanges for organic anions. May contribute to regulate the transport of organic compounds in testis across the blood-testis-barrier. This chain is Solute carrier organic anion transporter family member 1A5 (Slco1a5), found in Mus musculus (Mouse).